A 324-amino-acid chain; its full sequence is Geranylgeranyl diphosphate synthase (324 aa).

Isopentenyl diphosphate-binding residues include K46, R49, and H78. Residues D85 and D89 each contribute to the Mg(2+) site. Residue R94 participates in an all-trans-polyprenyl diphosphate binding. R95 provides a ligand contact to isopentenyl diphosphate. An all-trans-polyprenyl diphosphate is bound by residues K176, T177, Q214, K231, and K241.

This sequence belongs to the FPP/GGPP synthase family. The cofactor is Mg(2+).

The enzyme catalyses isopentenyl diphosphate + (2E,6E)-farnesyl diphosphate = (2E,6E,10E)-geranylgeranyl diphosphate + diphosphate. It participates in isoprenoid biosynthesis; geranylgeranyl diphosphate biosynthesis; geranylgeranyl diphosphate from farnesyl diphosphate and isopentenyl diphosphate: step 1/1. Its function is as follows. Catalyzes the sequential condensation of isopentenyl pyrophosphate with the allylic pyrophosphates to yield geranylgeranyl diphosphate (GGPP) which is a precursor of the ether-linked lipids. This Methanosarcina mazei (strain ATCC BAA-159 / DSM 3647 / Goe1 / Go1 / JCM 11833 / OCM 88) (Methanosarcina frisia) protein is Geranylgeranyl diphosphate synthase.